Here is a 417-residue protein sequence, read N- to C-terminus: Gamma-glutamyl phosphate reductase (417 aa).

This sequence belongs to the gamma-glutamyl phosphate reductase family.

It is found in the cytoplasm. The enzyme catalyses L-glutamate 5-semialdehyde + phosphate + NADP(+) = L-glutamyl 5-phosphate + NADPH + H(+). It participates in amino-acid biosynthesis; L-proline biosynthesis; L-glutamate 5-semialdehyde from L-glutamate: step 2/2. Its function is as follows. Catalyzes the NADPH-dependent reduction of L-glutamate 5-phosphate into L-glutamate 5-semialdehyde and phosphate. The product spontaneously undergoes cyclization to form 1-pyrroline-5-carboxylate. This is Gamma-glutamyl phosphate reductase from Legionella pneumophila (strain Paris).